The sequence spans 206 residues: Venom allergen 5 2 (206 aa).

Disulfide bonds link cysteine 4/cysteine 16, cysteine 8/cysteine 104, cysteine 28/cysteine 96, and cysteine 172/cysteine 189. The 144-residue stretch at 48–191 (DEHNRFRQKV…MKSHYLVCNY (144 aa)) folds into the SCP domain.

It belongs to the CRISP family. Venom allergen 5-like subfamily. As to expression, expressed by the venom gland.

It localises to the secreted. This chain is Venom allergen 5 2, found in Polybia paulista (Neotropical social wasp).